We begin with the raw amino-acid sequence, 209 residues long: Probable endopeptidase Cgl2188 (209 aa).

The signal sequence occupies residues 1 to 35; sequence MGKHRRNNSNATRKAVAASAVALGATAAIASPAQA. The region spanning 95–209 is the NlpC/P60 domain; sequence ASTGQAIVDA…YMPFHSAVRF (115 aa). Cys125 serves as the catalytic Nucleophile. The active-site Proton acceptor is His173. Residue His185 is part of the active site.

Belongs to the peptidase C40 family.

The protein localises to the secreted. This is Probable endopeptidase Cgl2188 from Corynebacterium glutamicum (strain ATCC 13032 / DSM 20300 / JCM 1318 / BCRC 11384 / CCUG 27702 / LMG 3730 / NBRC 12168 / NCIMB 10025 / NRRL B-2784 / 534).